Here is a 365-residue protein sequence, read N- to C-terminus: uncharacterized protein (365 aa).

3 helical membrane-spanning segments follow: residues 105–125 (TGNW…QCWL), 151–171 (ILTT…SLTI), and 187–207 (IFLI…SLIF).

The protein resides in the cell membrane. This is an uncharacterized protein from Mycoplasma genitalium (strain ATCC 33530 / DSM 19775 / NCTC 10195 / G37) (Mycoplasmoides genitalium).